Here is a 516-residue protein sequence, read N- to C-terminus: BAR/IMD domain-containing adapter protein 2-like 1 (516 aa).

One can recognise an IMD domain in the interval 1-249 (MSRGPEEVNR…MNMIEEIKTP (249 aa)). Residues 115-148 (MNATLKRYQAEHRNKLDSLEKSQAELKKIRRKSQ) adopt a coiled-coil conformation. 2 positions are modified to phosphothreonine: Thr-248 and Thr-257. Phosphoserine is present on residues Ser-261 and Ser-281. Residues 303 to 328 (NPATAGQSAEKTNNSTANTGDDPSLQ) are disordered. Position 332 is a phosphoserine (Ser-332). Residues 340–403 (MKKQKVKTIF…PSSYTKLLEE (64 aa)) form the SH3 domain. Thr-413 bears the Phosphothreonine mark. Residues Ser-415, Ser-421, and Ser-423 each carry the phosphoserine modification. A disordered region spans residues 454–516 (ADAAKIPSTS…TNDRSAPIIR (63 aa)). Positions 474–485 (ATSTSPSDSNGT) are enriched in polar residues. The segment at 488-516 (PPFLSGENPFATVKLRPTVTNDRSAPIIR) is binds F-actin.

Interacts with RAC1. Binds to F-actin. Interacts with FASLG. Post-translationally, phosphorylated on tyrosine in response to insulin.

It localises to the cytoplasm. The protein localises to the cytoskeleton. Functionally, may function as adapter protein. Involved in the formation of clusters of actin bundles. Plays a role in the reorganization of the actin cytoskeleton in response to bacterial infection. The sequence is that of BAR/IMD domain-containing adapter protein 2-like 1 (Baiap2l1) from Rattus norvegicus (Rat).